A 624-amino-acid chain; its full sequence is DNA-directed RNA polymerase subunit gamma (624 aa).

Zn(2+)-binding residues include Cys-70, Cys-72, Cys-85, and Cys-88. Asp-466, Asp-468, and Asp-470 together coordinate Mg(2+).

It belongs to the RNA polymerase beta' chain family. RpoC1 subfamily. In cyanobacteria the RNAP catalytic core is composed of 2 alpha, 1 beta, 1 beta', 1 gamma and 1 omega subunit. When a sigma factor is associated with the core the holoenzyme is formed, which can initiate transcription. Mg(2+) is required as a cofactor. It depends on Zn(2+) as a cofactor.

It catalyses the reaction RNA(n) + a ribonucleoside 5'-triphosphate = RNA(n+1) + diphosphate. DNA-dependent RNA polymerase catalyzes the transcription of DNA into RNA using the four ribonucleoside triphosphates as substrates. The chain is DNA-directed RNA polymerase subunit gamma from Synechococcus elongatus (strain ATCC 33912 / PCC 7942 / FACHB-805) (Anacystis nidulans R2).